The sequence spans 269 residues: Energy-coupling factor transporter ATP-binding protein EcfA1 (269 aa).

Positions 8-242 (IVFKNVSFQY…AEELTRIGLD (235 aa)) constitute an ABC transporter domain. 42–49 (GHNGSGKS) lines the ATP pocket.

It belongs to the ABC transporter superfamily. Energy-coupling factor EcfA family. As to quaternary structure, forms a stable energy-coupling factor (ECF) transporter complex composed of 2 membrane-embedded substrate-binding proteins (S component), 2 ATP-binding proteins (A component) and 2 transmembrane proteins (T component).

The protein localises to the cell membrane. ATP-binding (A) component of a common energy-coupling factor (ECF) ABC-transporter complex. Unlike classic ABC transporters this ECF transporter provides the energy necessary to transport a number of different substrates. This chain is Energy-coupling factor transporter ATP-binding protein EcfA1, found in Staphylococcus aureus (strain USA300).